The following is a 170-amino-acid chain: Peptide deformylase 2 (170 aa).

Residues Cys-94 and His-136 each contribute to the Fe cation site. Residue Glu-137 is part of the active site. His-140 serves as a coordination point for Fe cation.

It belongs to the polypeptide deformylase family. Requires Fe(2+) as cofactor.

The enzyme catalyses N-terminal N-formyl-L-methionyl-[peptide] + H2O = N-terminal L-methionyl-[peptide] + formate. Removes the formyl group from the N-terminal Met of newly synthesized proteins. Requires at least a dipeptide for an efficient rate of reaction. N-terminal L-methionine is a prerequisite for activity but the enzyme has broad specificity at other positions. The protein is Peptide deformylase 2 of Xanthomonas axonopodis pv. citri (strain 306).